The sequence spans 282 residues: 4-hydroxy-tetrahydrodipicolinate reductase (282 aa).

An NAD(+)-binding site is contributed by 12 to 17 (GVTGRM). Arginine 44 lines the NADP(+) pocket. NAD(+) is bound by residues 107-109 (GTT) and 131-134 (SSNF). The active-site Proton donor/acceptor is histidine 164. Position 165 (histidine 165) interacts with (S)-2,3,4,5-tetrahydrodipicolinate. The Proton donor role is filled by lysine 168. 174–175 (GT) lines the (S)-2,3,4,5-tetrahydrodipicolinate pocket.

The protein belongs to the DapB family. As to quaternary structure, homotetramer.

The protein localises to the cytoplasm. The enzyme catalyses (S)-2,3,4,5-tetrahydrodipicolinate + NAD(+) + H2O = (2S,4S)-4-hydroxy-2,3,4,5-tetrahydrodipicolinate + NADH + H(+). It carries out the reaction (S)-2,3,4,5-tetrahydrodipicolinate + NADP(+) + H2O = (2S,4S)-4-hydroxy-2,3,4,5-tetrahydrodipicolinate + NADPH + H(+). It functions in the pathway amino-acid biosynthesis; L-lysine biosynthesis via DAP pathway; (S)-tetrahydrodipicolinate from L-aspartate: step 4/4. In terms of biological role, catalyzes the conversion of 4-hydroxy-tetrahydrodipicolinate (HTPA) to tetrahydrodipicolinate. This Blochmanniella pennsylvanica (strain BPEN) protein is 4-hydroxy-tetrahydrodipicolinate reductase.